A 389-amino-acid chain; its full sequence is ELAV-like protein 2 (389 aa).

RRM domains are found at residues 66-145 (TNLI…YARP), 153-233 (ANLY…FANN), and 306-384 (WCIF…FKTS).

Belongs to the RRM elav family. In terms of assembly, part of a ribonucleoprotein (RNP) complex, at least composed of elavl1/elrA and/or elavl2/elrB, igf2bp3/vg1RBP, ddx6/Xp54, ybx2/frgy2, lsm14b/rap55b and, in a subset of RNP complexes, stau1/staufen. Binds RNA as a homooligomer. In terms of tissue distribution, expressed in brain, testis and ovary. Ovarian expression is restricted to follicle cells surrounding the oocyte. From the early tailbud stage, expression is neural-specific and is seen in both the central and peripheral nervous system in differentiating neurons but not proliferating precursors. Expressed in the retina from stage 32 with expression becoming restricted to the ganglion cell layer by later stages.

Its subcellular location is the cytoplasm. The protein localises to the cell cortex. Functionally, binds to poly-U elements and AU-rich elements (AREs) in the 3'-UTR of target mRNAs. Required for the vegetal localization of vg1 mRNA. Probably required for nervous system development. The chain is ELAV-like protein 2 (elavl2) from Xenopus laevis (African clawed frog).